The chain runs to 159 residues: SsrA-binding protein (159 aa).

The protein belongs to the SmpB family.

Its subcellular location is the cytoplasm. Functionally, required for rescue of stalled ribosomes mediated by trans-translation. Binds to transfer-messenger RNA (tmRNA), required for stable association of tmRNA with ribosomes. tmRNA and SmpB together mimic tRNA shape, replacing the anticodon stem-loop with SmpB. tmRNA is encoded by the ssrA gene; the 2 termini fold to resemble tRNA(Ala) and it encodes a 'tag peptide', a short internal open reading frame. During trans-translation Ala-aminoacylated tmRNA acts like a tRNA, entering the A-site of stalled ribosomes, displacing the stalled mRNA. The ribosome then switches to translate the ORF on the tmRNA; the nascent peptide is terminated with the 'tag peptide' encoded by the tmRNA and targeted for degradation. The ribosome is freed to recommence translation, which seems to be the essential function of trans-translation. The polypeptide is SsrA-binding protein (Bifidobacterium adolescentis (strain ATCC 15703 / DSM 20083 / NCTC 11814 / E194a)).